Here is a 505-residue protein sequence, read N- to C-terminus: ATP synthase subunit beta (505 aa).

158-165 (GGAGVGKT) lines the ATP pocket.

The protein belongs to the ATPase alpha/beta chains family. F-type ATPases have 2 components, CF(1) - the catalytic core - and CF(0) - the membrane proton channel. CF(1) has five subunits: alpha(3), beta(3), gamma(1), delta(1), epsilon(1). CF(0) has three main subunits: a(1), b(2) and c(9-12). The alpha and beta chains form an alternating ring which encloses part of the gamma chain. CF(1) is attached to CF(0) by a central stalk formed by the gamma and epsilon chains, while a peripheral stalk is formed by the delta and b chains.

The protein resides in the cell inner membrane. The enzyme catalyses ATP + H2O + 4 H(+)(in) = ADP + phosphate + 5 H(+)(out). In terms of biological role, produces ATP from ADP in the presence of a proton gradient across the membrane. The catalytic sites are hosted primarily by the beta subunits. The chain is ATP synthase subunit beta from Parabacteroides distasonis (strain ATCC 8503 / DSM 20701 / CIP 104284 / JCM 5825 / NCTC 11152).